Here is a 415-residue protein sequence, read N- to C-terminus: Lipoyl synthase, mitochondrial (415 aa).

A mitochondrion-targeting transit peptide spans 1–32 (MAASTNRLRFLYSSARTVPQTGSITPISRRTY). Polar residues predominate over residues 20–32 (QTGSITPISRRTY). Positions 20-53 (QTGSITPISRRTYATTEPSPSATGAPATARKRTN) are disordered. Residues 33–47 (ATTEPSPSATGAPAT) are compositionally biased toward low complexity. Cysteine 132, cysteine 137, cysteine 143, cysteine 163, cysteine 167, cysteine 170, and serine 378 together coordinate [4Fe-4S] cluster. A Radical SAM core domain is found at 146–367 (GSDKSAATAT…RQRALDMGFL (222 aa)). A disordered region spans residues 395 to 415 (AAGTAGESVTDSKAAVDEATR).

It belongs to the radical SAM superfamily. Lipoyl synthase family. The cofactor is [4Fe-4S] cluster.

It localises to the mitochondrion. It catalyses the reaction [[Fe-S] cluster scaffold protein carrying a second [4Fe-4S](2+) cluster] + N(6)-octanoyl-L-lysyl-[protein] + 2 oxidized [2Fe-2S]-[ferredoxin] + 2 S-adenosyl-L-methionine + 4 H(+) = [[Fe-S] cluster scaffold protein] + N(6)-[(R)-dihydrolipoyl]-L-lysyl-[protein] + 4 Fe(3+) + 2 hydrogen sulfide + 2 5'-deoxyadenosine + 2 L-methionine + 2 reduced [2Fe-2S]-[ferredoxin]. It participates in protein modification; protein lipoylation via endogenous pathway; protein N(6)-(lipoyl)lysine from octanoyl-[acyl-carrier-protein]: step 2/2. In terms of biological role, catalyzes the radical-mediated insertion of two sulfur atoms into the C-6 and C-8 positions of the octanoyl moiety bound to the lipoyl domains of lipoate-dependent enzymes, thereby converting the octanoylated domains into lipoylated derivatives. In Aspergillus flavus (strain ATCC 200026 / FGSC A1120 / IAM 13836 / NRRL 3357 / JCM 12722 / SRRC 167), this protein is Lipoyl synthase, mitochondrial.